The primary structure comprises 234 residues: Ubiquinone biosynthesis O-methyltransferase (234 aa).

S-adenosyl-L-methionine is bound by residues Arg37, Gly56, Asp77, and Met121.

It belongs to the methyltransferase superfamily. UbiG/COQ3 family.

The enzyme catalyses a 3-demethylubiquinol + S-adenosyl-L-methionine = a ubiquinol + S-adenosyl-L-homocysteine + H(+). It carries out the reaction a 3-(all-trans-polyprenyl)benzene-1,2-diol + S-adenosyl-L-methionine = a 2-methoxy-6-(all-trans-polyprenyl)phenol + S-adenosyl-L-homocysteine + H(+). It participates in cofactor biosynthesis; ubiquinone biosynthesis. In terms of biological role, O-methyltransferase that catalyzes the 2 O-methylation steps in the ubiquinone biosynthetic pathway. This chain is Ubiquinone biosynthesis O-methyltransferase, found in Aromatoleum aromaticum (strain DSM 19018 / LMG 30748 / EbN1) (Azoarcus sp. (strain EbN1)).